The sequence spans 1237 residues: MSTGEAQQLIQKLLLEALARRLAQPKWLSLLHQLVRRIEAAQDDDGTFDVIPSLEGSHAAECLVKYLLSQSFIDPLLIEYLQALIYGSANRSGVSPDQGPITDVMTVTLHLLANVQAAASNVPAIEIISSVIGQGLLMTFQAPVPFRVSSPSFLALLQRLFADPTYEQDQTPSFPVDHVDTGASDIKVAPASLGFVVANLRLLALAADPAIASPQNLLAPRVSITVLINVGQGLLAYVTQILSAAQTAKNDKLKPDGAILQQLRSMASTSLTEIEAVLRSMNPAWKDEIALLRSLTSQIGVIDQISESFAEANTSKLSTRPTKRKLETLQDAQQRATWDHFLDVSTIAASEKPAVEPETALLMHLLVDHHTSWDFKLDAIKTLFLARRSAAAPSLTLEKSLTAFYFELLVAAIDACAAVVEMPPAFKGAEVYATIWRNALCGMIPELVLQLEQWLDGNQELPLRGQRLEAPHVRLEAALRAALLVMSDRLNVCESATNQSHAHGNVAATNGEEAAGAHANMMSDVLGLGTPPSQPIRAWLLRACIEHSLARPEAIADEFANGHKLASEVQSLTQSLRMDAQLEGLALNTLFETRIPTDHPVELLQRVASDPGTHFIFARQLVLQVQGWLEQHDLESIARWCKALTENACEGGAMLDTIMIYIDPAQMLDPLASILDHQDLGQTSDEPSTLSDILLFVQLLCYRYSTPITRISRYTVSNHDMDTVDSSAPLHRSMPPFLATHLATSSVSYPLSVLSEEDRGLVSRWIHALFGNEGISDDLISASPPTTLLRLSPLLFSQSISACQHGIIDLETLRGGLSYFLQDLLSFALPGALVWLLSEISRTPLQPILDFLSESGLQASVVDVPSSDGTLANGLPRNATSKSVCLEVLALLVDTDACPSSVRQLIAKAFDAFVSTIEADVTAAPQLAVGCETFNLASLKARMEGAGVTARLLSETGASWLQSVAAGHQDSRSKLFSMLTTLQPSVHAMDRLIGALKSGQVGRNGRDQKGLAAWLCFIAPASEPTSALRFVQRLELGDIEESAIEGVVRIVGLVVGLIMAAEAQRATTDAVADDLLALARAADTNARGTKATVADTTAAARPAEADLFDDEPCSPQPPHAAANATSHTSNAAPTVTSAASLLASGELRTTSKQVLDMMALKLVRFRSHMLGEKNAKSTTISAKWATLQSAIADHLAGGEAWHGAQQCRERTQNDAPVNGGKDADSGSGLSAWLSAMS.

2 disordered regions span residues 1109–1131 (DDEP…TSNA) and 1202–1226 (HGAQ…ADSG). Over residues 1119–1131 (HAAANATSHTSNA) the composition is skewed to low complexity.

Belongs to the Mediator complex subunit 5 family. Component of the Mediator complex.

It is found in the nucleus. Its function is as follows. Component of the Mediator complex, a coactivator involved in the regulated transcription of nearly all RNA polymerase II-dependent genes. Mediator functions as a bridge to convey information from gene-specific regulatory proteins to the basal RNA polymerase II transcription machinery. Mediator is recruited to promoters by direct interactions with regulatory proteins and serves as a scaffold for the assembly of a functional preinitiation complex with RNA polymerase II and the general transcription factors. The sequence is that of Mediator of RNA polymerase II transcription subunit 5 (NUT1) from Mycosarcoma maydis (Corn smut fungus).